Here is a 969-residue protein sequence, read N- to C-terminus: Protein translocase subunit SecA (969 aa).

ATP-binding positions include glutamine 99, 117–121 (GEGKT), and aspartate 631.

This sequence belongs to the SecA family. As to quaternary structure, monomer and homodimer. Part of the essential Sec protein translocation apparatus which comprises SecA, SecYEG and auxiliary proteins SecDF. Other proteins may also be involved.

Its subcellular location is the cell inner membrane. The protein localises to the cytoplasm. The enzyme catalyses ATP + H2O + cellular proteinSide 1 = ADP + phosphate + cellular proteinSide 2.. Functionally, part of the Sec protein translocase complex. Interacts with the SecYEG preprotein conducting channel. Has a central role in coupling the hydrolysis of ATP to the transfer of proteins into and across the cell membrane, serving as an ATP-driven molecular motor driving the stepwise translocation of polypeptide chains across the membrane. In Chlamydia trachomatis serovar A (strain ATCC VR-571B / DSM 19440 / HAR-13), this protein is Protein translocase subunit SecA.